Consider the following 386-residue polypeptide: F420 non-reducing hydrogenase I small subunit (386 aa).

A signal peptide (tat-type signal) is located at residues 1–51; that stretch reads MVEMSTGTTNLVRTLDSMDFLKMDRRTFMKAVSALGATAFLGTYQTEIVNA. Residues C67, C70, C178, C227, H273, C276, C296, and C302 each contribute to the [4Fe-4S] cluster site. C311, C330, and C333 together coordinate [3Fe-4S] cluster.

Belongs to the [NiFe]/[NiFeSe] hydrogenase small subunit family. As to quaternary structure, composed of a large subunit (VhoA), a small subunit (VhoG) and a cytochrome subunit (VhoC). The cofactor is [4Fe-4S] cluster. [3Fe-4S] cluster is required as a cofactor. Post-translationally, predicted to be exported by the Tat system. The position of the signal peptide cleavage has not been experimentally proven.

Its subcellular location is the cell membrane. The catalysed reaction is methanophenazine + H2 = dihydromethanophenazine. In terms of biological role, part of the F420 non-reducing hydrogenase I complex that catalyzes the reduction of methanophenazine to dihydromethanophenazine. This is F420 non-reducing hydrogenase I small subunit from Methanosarcina mazei (strain ATCC BAA-159 / DSM 3647 / Goe1 / Go1 / JCM 11833 / OCM 88) (Methanosarcina frisia).